The following is a 146-amino-acid chain: uncharacterized protein (146 aa).

This sequence belongs to the BlaI transcriptional regulatory family.

This is an uncharacterized protein from Latilactobacillus sakei (Lactobacillus sakei).